The primary structure comprises 357 residues: Protein-glutamate methylesterase/protein-glutamine glutaminase 1 (357 aa).

Residues 10-127 (RTLIVDDSAF…DVNKIEKELV (118 aa)) form the Response regulatory domain. Asp61 carries the 4-aspartylphosphate modification. Positions 159–353 (SCAGDFAVLI…EEIVRMSEVK (195 aa)) constitute a CheB-type methylesterase domain. Active-site residues include Ser171, His198, and Asp295.

It belongs to the CheB family. In terms of processing, phosphorylated by CheA. Phosphorylation of the N-terminal regulatory domain activates the methylesterase activity.

The protein localises to the cytoplasm. It catalyses the reaction [protein]-L-glutamate 5-O-methyl ester + H2O = L-glutamyl-[protein] + methanol + H(+). The catalysed reaction is L-glutaminyl-[protein] + H2O = L-glutamyl-[protein] + NH4(+). Its function is as follows. Involved in chemotaxis. Part of a chemotaxis signal transduction system that modulates chemotaxis in response to various stimuli. Catalyzes the demethylation of specific methylglutamate residues introduced into the chemoreceptors (methyl-accepting chemotaxis proteins or MCP) by CheR. Also mediates the irreversible deamidation of specific glutamine residues to glutamic acid. This is Protein-glutamate methylesterase/protein-glutamine glutaminase 1 from Methanosarcina mazei (strain ATCC BAA-159 / DSM 3647 / Goe1 / Go1 / JCM 11833 / OCM 88) (Methanosarcina frisia).